A 231-amino-acid polypeptide reads, in one-letter code: MAKKKAFIPLLCLTSIVFLPWCISFTFKKSLESWITHWYNTKESEIFLNTIQEKSILKKFLEFEELFLLDEMLKEYPETRLQNLRIEIYKETIQLIQTNNQDHIHTILHFCTNIICFLILSVYSIRGNQELIILNSWVQEFLYNLSDTIKAFSILFLIEFCVGYHSTGGWELMIGSVYKDFGFIPNDHIISFLVSILPAILDTIFKYWIFRYLNRVSPSLVLIYDSIPFQE.

Transmembrane regions (helical) follow at residues 7–27 (FIPL…SFTF), 104–124 (IHTI…SVYS), 154–174 (ILFL…ELMI), and 189–209 (IISF…KYWI).

It belongs to the CemA family.

The protein localises to the plastid. It is found in the chloroplast inner membrane. It catalyses the reaction K(+)(in) + H(+)(out) = K(+)(out) + H(+)(in). In terms of biological role, contributes to K(+)/H(+) antiport activity by supporting proton efflux to control proton extrusion and homeostasis in chloroplasts in a light-dependent manner to modulate photosynthesis. Prevents excessive induction of non-photochemical quenching (NPQ) under continuous-light conditions. Indirectly promotes efficient inorganic carbon uptake into chloroplasts. This Pisum sativum (Garden pea) protein is Potassium/proton antiporter CemA.